A 177-amino-acid polypeptide reads, in one-letter code: Large ribosomal subunit protein uL6 (177 aa).

This sequence belongs to the universal ribosomal protein uL6 family. Part of the 50S ribosomal subunit.

Its function is as follows. This protein binds to the 23S rRNA, and is important in its secondary structure. It is located near the subunit interface in the base of the L7/L12 stalk, and near the tRNA binding site of the peptidyltransferase center. This chain is Large ribosomal subunit protein uL6, found in Rhizobium leguminosarum bv. trifolii (strain WSM2304).